A 168-amino-acid polypeptide reads, in one-letter code: uncharacterized protein (168 aa).

The segment covering 1–10 (MSPTTGPQPN) has biased composition (pro residues). Disordered stretches follow at residues 1 to 23 (MSPT…TGPQ) and 117 to 143 (EPGN…RGPQ).

This is an uncharacterized protein from Homo sapiens (Human).